We begin with the raw amino-acid sequence, 479 residues long: UDP-N-acetylmuramate--L-alanine ligase (479 aa).

128 to 134 (GAHGKTT) contacts ATP.

The protein belongs to the MurCDEF family.

It is found in the cytoplasm. The catalysed reaction is UDP-N-acetyl-alpha-D-muramate + L-alanine + ATP = UDP-N-acetyl-alpha-D-muramoyl-L-alanine + ADP + phosphate + H(+). Its pathway is cell wall biogenesis; peptidoglycan biosynthesis. In terms of biological role, cell wall formation. This chain is UDP-N-acetylmuramate--L-alanine ligase, found in Psychrobacter arcticus (strain DSM 17307 / VKM B-2377 / 273-4).